We begin with the raw amino-acid sequence, 68 residues long: Probable tautomerase HP_0924 (68 aa).

Pro-2 functions as the Proton acceptor; via imino nitrogen in the catalytic mechanism.

This sequence belongs to the 4-oxalocrotonate tautomerase family.

In Helicobacter pylori (strain ATCC 700392 / 26695) (Campylobacter pylori), this protein is Probable tautomerase HP_0924.